Here is a 142-residue protein sequence, read N- to C-terminus: MAKKVEAYIKLQVAAGMANPSPPVGPALGQRGVNIMEFCKAFNAKTESMEKGLPVPVVITVYSDRSFTFVTKTPPAAVLLKKAAGIKSGSGRPNTEKVGTVTDAQIQEIAEAKAADMTGADIEAMKRSIAGTARSMGLVVEG.

It belongs to the universal ribosomal protein uL11 family. Part of the ribosomal stalk of the 50S ribosomal subunit. Interacts with L10 and the large rRNA to form the base of the stalk. L10 forms an elongated spine to which L12 dimers bind in a sequential fashion forming a multimeric L10(L12)X complex. One or more lysine residues are methylated.

In terms of biological role, forms part of the ribosomal stalk which helps the ribosome interact with GTP-bound translation factors. The protein is Large ribosomal subunit protein uL11 of Vibrio vulnificus (strain YJ016).